The chain runs to 194 residues: Fe/S biogenesis protein NfuA (194 aa).

2 residues coordinate [4Fe-4S] cluster: C152 and C155.

Belongs to the NfuA family. Homodimer. Requires [4Fe-4S] cluster as cofactor.

Involved in iron-sulfur cluster biogenesis. Binds a 4Fe-4S cluster, can transfer this cluster to apoproteins, and thereby intervenes in the maturation of Fe/S proteins. Could also act as a scaffold/chaperone for damaged Fe/S proteins. The protein is Fe/S biogenesis protein NfuA of Pseudomonas putida (strain GB-1).